The primary structure comprises 175 residues: Glutamyl-tRNA(Gln) amidotransferase subunit F, mitochondrial (175 aa).

A mitochondrion-targeting transit peptide spans 1 to 19 (MLKVSARHAPVLRLPRRFY).

It belongs to the GatF family. In terms of assembly, subunit of the heterotrimeric GatFAB amidotransferase (AdT) complex, composed of A, B and F subunits.

It is found in the mitochondrion inner membrane. It carries out the reaction L-glutamyl-tRNA(Gln) + L-glutamine + ATP + H2O = L-glutaminyl-tRNA(Gln) + L-glutamate + ADP + phosphate + H(+). Allows the formation of correctly charged Gln-tRNA(Gln) through the transamidation of misacylated Glu-tRNA(Gln) in the mitochondria. The reaction takes place in the presence of glutamine and ATP through an activated gamma-phospho-Glu-tRNA(Gln). Required for proper protein synthesis within the mitochondrion. This Lachancea thermotolerans (strain ATCC 56472 / CBS 6340 / NRRL Y-8284) (Yeast) protein is Glutamyl-tRNA(Gln) amidotransferase subunit F, mitochondrial.